Here is a 201-residue protein sequence, read N- to C-terminus: Cobalt-precorrin-7 C(5)-methyltransferase (201 aa).

This sequence belongs to the precorrin methyltransferase family.

It carries out the reaction Co-precorrin-7 + S-adenosyl-L-methionine = Co-precorrin-8X + S-adenosyl-L-homocysteine + H(+). Its pathway is cofactor biosynthesis; adenosylcobalamin biosynthesis; cob(II)yrinate a,c-diamide from sirohydrochlorin (anaerobic route): step 8/10. Functionally, catalyzes the methylation of C-5 in cobalt-precorrin-7 to form cobalt-precorrin-8. The chain is Cobalt-precorrin-7 C(5)-methyltransferase (cbiE) from Salmonella typhi.